The chain runs to 292 residues: Probable ABC transporter permease protein YurN (292 aa).

6 helical membrane-spanning segments follow: residues 7-27 (IIPY…YIPI), 70-90 (VLYA…LAAV), 106-126 (VFFL…DFIY), 160-180 (VIFV…IVSI), 215-235 (FVAV…PYIL), and 260-280 (MMGY…ALSL). The ABC transmembrane type-1 domain occupies 66 to 282 (LTNNVLYAVI…IITLALSLMQ (217 aa)).

The protein belongs to the binding-protein-dependent transport system permease family. MalFG subfamily.

Its subcellular location is the cell membrane. In terms of biological role, probably part of the binding-protein-dependent transport system YurMNO. Probably responsible for the translocation of the substrate across the membrane. This is Probable ABC transporter permease protein YurN (yurN) from Bacillus subtilis (strain 168).